Here is an 84-residue protein sequence, read N- to C-terminus: uncharacterized protein (84 aa).

The span at 1–14 shows a compositional bias: low complexity; it reads MQKLNKSSSKGKNN. The segment at 1 to 84 is disordered; the sequence is MQKLNKSSSK…VDKGERKESE (84 aa). A compositionally biased stretch (gly residues) spans 28–40; that stretch reads STYGFGPYGGGGF. Composition is skewed to basic and acidic residues over residues 53–65 and 73–84; these read DTKKLKGEVEEGT and KLVDKGERKESE.

This is an uncharacterized protein from Schizosaccharomyces pombe (strain 972 / ATCC 24843) (Fission yeast).